Consider the following 577-residue polypeptide: Arginine--tRNA ligase (577 aa).

The 'HIGH' region signature appears at 122–132; it reads PNVAKEMHVGH.

This sequence belongs to the class-I aminoacyl-tRNA synthetase family. Monomer.

The protein resides in the cytoplasm. It carries out the reaction tRNA(Arg) + L-arginine + ATP = L-arginyl-tRNA(Arg) + AMP + diphosphate. The sequence is that of Arginine--tRNA ligase from Salmonella enteritidis PT4 (strain P125109).